The chain runs to 932 residues: Protocadherin gamma-A6 (932 aa).

The signal sequence occupies residues 1 to 29; sequence MAPPQRHPQRSEQVLLLTLLGTLWGAAAA. Cadherin domains lie at 30 to 133, 134 to 242, 243 to 347, 348 to 452, 453 to 562, and 570 to 682; these read QIRY…TPRF, LKEE…TPVF, TQPV…VPEV, VVTS…PPTF, PHSS…APEI, and DGST…EPSA. Residues 30–692 are Extracellular-facing; it reads QIRYSIPEEL…KPNDSDLTLY (663 aa). Residue N81 is glycosylated (N-linked (GlcNAc...) asparagine). N419 and N545 each carry an N-linked (GlcNAc...) asparagine glycan. The N-linked (GlcNAc...) asparagine glycan is linked to N685. A helical membrane pass occupies residues 693–713; the sequence is LVVAVAAVSCVFLAFVIVLLA. Residues 714 to 932 are Cytoplasmic-facing; it reads LRLQRWHKSR…KKKSGKKEKK (219 aa). Disordered regions lie at residues 803–841 and 902–932; these read DPRQLQQAPPNTDWRFSQAQRPGTSGSQNGDDTGTWPNN and ATLTNAAGKRDGKAPAGGNGNKKKSGKKEKK. Residues 806–841 are compositionally biased toward polar residues; it reads QLQQAPPNTDWRFSQAQRPGTSGSQNGDDTGTWPNN. The span at 922 to 932 shows a compositional bias: basic residues; that stretch reads NKKKSGKKEKK.

The protein resides in the cell membrane. In terms of biological role, potential calcium-dependent cell-adhesion protein. May be involved in the establishment and maintenance of specific neuronal connections in the brain. This is Protocadherin gamma-A6 (PCDHGA6) from Pan troglodytes (Chimpanzee).